Consider the following 935-residue polypeptide: C-1-tetrahydrofolate synthase, cytoplasmic (935 aa).

Met1 is subject to N-acetylmethionine. Positions 2–291 are methylenetetrahydrofolate dehydrogenase and methenyltetrahydrofolate cyclohydrolase (D/C) domain; the sequence is APAEILNGRE…MLMQSTVESA (290 aa). Substrate-binding positions include 52–56 and 99–101; these read YINVK and VQL. Lys56 is an active-site residue. NADP(+) is bound by residues 172–174 and Ser197; that span reads GRS. Substrate is bound at residue 272-276; sequence PGGVG. The segment at 310–935 is formyltetrahydrofolate synthetase domain; it reads LNLKTPDPSD…PETQQVNGLF (626 aa). Ser318 carries the phosphoserine modification. Residue 380–387 participates in ATP binding; that stretch reads TPLGEGKS. Residues Ser413 and Ser490 each carry the phosphoserine modification.

The protein in the N-terminal section; belongs to the tetrahydrofolate dehydrogenase/cyclohydrolase family. In the C-terminal section; belongs to the formate--tetrahydrofolate ligase family. Homodimer.

The protein resides in the cytoplasm. It carries out the reaction (6R)-5,10-methylene-5,6,7,8-tetrahydrofolate + NADP(+) = (6R)-5,10-methenyltetrahydrofolate + NADPH. It catalyses the reaction (6R)-5,10-methenyltetrahydrofolate + H2O = (6R)-10-formyltetrahydrofolate + H(+). The enzyme catalyses (6S)-5,6,7,8-tetrahydrofolate + formate + ATP = (6R)-10-formyltetrahydrofolate + ADP + phosphate. It participates in one-carbon metabolism; tetrahydrofolate interconversion. Functionally, trifunctional enzyme that catalyzes the interconversion of three forms of one-carbon-substituted tetrahydrofolate: (6R)-5,10-methylene-5,6,7,8-tetrahydrofolate, 5,10-methenyltetrahydrofolate and (6S)-10-formyltetrahydrofolate. These derivatives of tetrahydrofolate are differentially required in nucleotide and amino acid biosynthesis, (6S)-10-formyltetrahydrofolate being required for purine biosynthesis while (6R)-5,10-methylene-5,6,7,8-tetrahydrofolate is used for serine and methionine biosynthesis for instance. The sequence is that of C-1-tetrahydrofolate synthase, cytoplasmic (MTHFD1) from Pongo abelii (Sumatran orangutan).